The sequence spans 475 residues: Legumain (475 aa).

Residues 1–15 form the signal peptide; sequence MVMMLVMLSLHGTAA. Residues 16–35 constitute a propeptide that is removed on maturation; that stretch reads RLNRREWDSVIQLPTEPVDD. Histidine 158 is a catalytic residue. The Nucleophile role is filled by cysteine 200. Cysteine 233 and cysteine 247 are disulfide-bonded. The N-linked (GlcNAc...) asparagine glycan is linked to asparagine 300. 2 disulfide bridges follow: cysteine 411–cysteine 441 and cysteine 423–cysteine 458.

Belongs to the peptidase C13 family. Homodimer.

It catalyses the reaction Hydrolysis of proteins and small molecule substrates at -Asn-|-Xaa- bonds.. With respect to regulation, repressed by various protease inhibitors including p-chloromercuribenzene sulfonic acid (PCMBS), N-ethylmaleimide, kininogen, elastatinal, cystatin EW and leupeptin. Its function is as follows. Asparaginyl endopeptidase able to cleave almost all peptide bonds on the carboxyl side of Asn residues, except at the NH2 terminus or second position or with N-glycosylated Asn. Responsible for the maturation (circular permutation) of concanavalin A from its precursor, by performing both cleavage and cleavage-coupled transpeptidation to form conA. This chain is Legumain, found in Canavalia ensiformis (Jack bean).